The chain runs to 480 residues: Mannose-1-phosphate guanylyltransferase ManC (480 aa).

The protein belongs to the mannose-6-phosphate isomerase type 2 family.

It carries out the reaction alpha-D-mannose 1-phosphate + GTP + H(+) = GDP-alpha-D-mannose + diphosphate. The protein operates within nucleotide-sugar biosynthesis; GDP-alpha-D-mannose biosynthesis; GDP-alpha-D-mannose from alpha-D-mannose 1-phosphate (GTP route): step 1/1. In terms of biological role, involved in the biosynthesis of the capsular polysaccharide colanic acid. This is Mannose-1-phosphate guanylyltransferase ManC (manC) from Salmonella typhimurium (strain LT2 / SGSC1412 / ATCC 700720).